Reading from the N-terminus, the 262-residue chain is Nickel import ATP-binding protein NikD (262 aa).

One can recognise an ABC transporter domain in the interval 6–249; that stretch reads LAIEGLTATT…PGHEVTRMLV (244 aa). 42–49 contacts ATP; it reads GASGSGKS.

The protein belongs to the ABC transporter superfamily. Nickel importer (TC 3.A.1.5.3) family. As to quaternary structure, the complex is composed of two ATP-binding proteins (NikD and NikE), two transmembrane proteins (NikB and NikC) and a solute-binding protein (NikA).

Its subcellular location is the cell inner membrane. The enzyme catalyses Ni(2+)(out) + ATP + H2O = Ni(2+)(in) + ADP + phosphate + H(+). Functionally, part of the ABC transporter complex NikABCDE involved in nickel import. Responsible for energy coupling to the transport system. In Brucella abortus biovar 1 (strain 9-941), this protein is Nickel import ATP-binding protein NikD.